An 82-amino-acid polypeptide reads, in one-letter code: EMBRYO SURROUNDING FACTOR 1.2 (82 aa).

Positions 1-23 (MKSQTVLISIFIFSFFALHQCMQ) are cleaved as a signal peptide. Intrachain disulfides connect cysteine 40-cysteine 56, cysteine 45-cysteine 77, cysteine 54-cysteine 71, and cysteine 57-cysteine 64.

This sequence belongs to the MEG family. As to expression, expressed exclusively in ovule embryo sacs and in early developing endosperms.

In terms of biological role, maternally-contributed central cell peptide regulating suspensor development and correct auxin distribution in early developing embryos. This chain is EMBRYO SURROUNDING FACTOR 1.2 (ESF1.2), found in Arabidopsis thaliana (Mouse-ear cress).